A 302-amino-acid chain; its full sequence is Bifunctional protein FolD (302 aa).

NADP(+) contacts are provided by residues 165-167 (GRS), Ser-190, and Ile-231.

It belongs to the tetrahydrofolate dehydrogenase/cyclohydrolase family. Homodimer.

The enzyme catalyses (6R)-5,10-methylene-5,6,7,8-tetrahydrofolate + NADP(+) = (6R)-5,10-methenyltetrahydrofolate + NADPH. It carries out the reaction (6R)-5,10-methenyltetrahydrofolate + H2O = (6R)-10-formyltetrahydrofolate + H(+). Its pathway is one-carbon metabolism; tetrahydrofolate interconversion. Catalyzes the oxidation of 5,10-methylenetetrahydrofolate to 5,10-methenyltetrahydrofolate and then the hydrolysis of 5,10-methenyltetrahydrofolate to 10-formyltetrahydrofolate. The chain is Bifunctional protein FolD from Prochlorococcus marinus (strain MIT 9313).